Here is a 168-residue protein sequence, read N- to C-terminus: Small ribosomal subunit protein uS4 (168 aa).

Residues 103 to 167 (RRLQTIVYKK…SPFKKSIEEK (65 aa)) enclose the S4 RNA-binding domain.

This sequence belongs to the universal ribosomal protein uS4 family. As to quaternary structure, part of the 30S ribosomal subunit. Contacts protein S5. The interaction surface between S4 and S5 is involved in control of translational fidelity.

One of the primary rRNA binding proteins, it binds directly to 16S rRNA where it nucleates assembly of the body of the 30S subunit. In terms of biological role, with S5 and S12 plays an important role in translational accuracy. This is Small ribosomal subunit protein uS4 from Staphylothermus marinus (strain ATCC 43588 / DSM 3639 / JCM 9404 / F1).